Reading from the N-terminus, the 290-residue chain is Light-independent protochlorophyllide reductase iron-sulfur ATP-binding protein (290 aa).

Residues 10–15 and Lys-39 each bind ATP; that span reads GIGKST. Ser-14 is a Mg(2+) binding site. The [4Fe-4S] cluster site is built by Cys-95 and Cys-129. 180-181 contributes to the ATP binding site; it reads NR.

The protein belongs to the NifH/BchL/ChlL family. As to quaternary structure, homodimer. Protochlorophyllide reductase is composed of three subunits; ChlL, ChlN and ChlB. It depends on [4Fe-4S] cluster as a cofactor.

It is found in the plastid. Its subcellular location is the chloroplast. The enzyme catalyses chlorophyllide a + oxidized 2[4Fe-4S]-[ferredoxin] + 2 ADP + 2 phosphate = protochlorophyllide a + reduced 2[4Fe-4S]-[ferredoxin] + 2 ATP + 2 H2O. Its pathway is porphyrin-containing compound metabolism; chlorophyll biosynthesis (light-independent). Functionally, component of the dark-operative protochlorophyllide reductase (DPOR) that uses Mg-ATP and reduced ferredoxin to reduce ring D of protochlorophyllide (Pchlide) to form chlorophyllide a (Chlide). This reaction is light-independent. The L component serves as a unique electron donor to the NB-component of the complex, and binds Mg-ATP. The sequence is that of Light-independent protochlorophyllide reductase iron-sulfur ATP-binding protein from Angiopteris evecta (Mule's foot fern).